The chain runs to 357 residues: NADH-quinone oxidoreductase subunit H (357 aa).

8 helical membrane passes run 18 to 38 (VAWM…PIIL), 92 to 112 (VLFV…WAVV), 127 to 147 (LLYI…AGWA), 165 to 185 (VSYE…SGSL), 206 to 226 (FLSW…ISAV), 268 to 288 (ILLS…PIDI), 294 to 314 (IPGW…FVWF), and 329 to 349 (LGWK…AIWM).

The protein belongs to the complex I subunit 1 family. NDH-1 is composed of 14 different subunits. Subunits NuoA, H, J, K, L, M, N constitute the membrane sector of the complex.

It localises to the cell inner membrane. It carries out the reaction a quinone + NADH + 5 H(+)(in) = a quinol + NAD(+) + 4 H(+)(out). In terms of biological role, NDH-1 shuttles electrons from NADH, via FMN and iron-sulfur (Fe-S) centers, to quinones in the respiratory chain. The immediate electron acceptor for the enzyme in this species is believed to be ubiquinone. Couples the redox reaction to proton translocation (for every two electrons transferred, four hydrogen ions are translocated across the cytoplasmic membrane), and thus conserves the redox energy in a proton gradient. This subunit may bind ubiquinone. This Bordetella bronchiseptica (strain ATCC BAA-588 / NCTC 13252 / RB50) (Alcaligenes bronchisepticus) protein is NADH-quinone oxidoreductase subunit H.